The following is a 263-amino-acid chain: Transcription factor bHLH27 (263 aa).

Low complexity predominate over residues 32-47 (EAFSGSGESSSPDGAA). Positions 32 to 61 (EAFSGSGESSSPDGAATSPASSKNVVSERN) are disordered. Residues 49–58 (SPASSKNVVS) are compositionally biased toward polar residues. One can recognise a bHLH domain in the interval 50-99 (PASSKNVVSERNRRQKLNQRLFALRSVVPNISKLDKASVIKDSIDYMQEL).

As to quaternary structure, homodimer. In terms of tissue distribution, expressed constitutively in roots, leaves, stems, and flowers.

The protein resides in the nucleus. The sequence is that of Transcription factor bHLH27 (BHLH27) from Arabidopsis thaliana (Mouse-ear cress).